We begin with the raw amino-acid sequence, 333 residues long: Adenosine deaminase (333 aa).

Positions 12 and 14 each coordinate Zn(2+). Residues His-14 and Asp-16 each contribute to the substrate site. Residues 14 to 16 (HLD), Ser-141, and Gly-170 each bind pentostatin. Gly-170 is a substrate binding site. His-197 is a binding site for Zn(2+). The pentostatin site is built by Glu-200, His-221, and Asp-278. Glu-200 serves as the catalytic Proton donor. Residue Asp-278 coordinates Zn(2+). Residue Asp-279 participates in substrate binding.

Belongs to the metallo-dependent hydrolases superfamily. Adenosine and AMP deaminases family. Adenosine deaminase subfamily. The cofactor is Zn(2+).

It carries out the reaction adenosine + H2O + H(+) = inosine + NH4(+). The catalysed reaction is 2'-deoxyadenosine + H2O + H(+) = 2'-deoxyinosine + NH4(+). In terms of biological role, catalyzes the hydrolytic deamination of adenosine and 2-deoxyadenosine. The polypeptide is Adenosine deaminase (Salmonella typhimurium (strain LT2 / SGSC1412 / ATCC 700720)).